We begin with the raw amino-acid sequence, 482 residues long: Glutamate-rich WD repeat-containing protein 1 (482 aa).

2 disordered regions span residues 1-75 and 148-180; these read MSSK…WRAG and QLHK…EDKD. Acidic residues-rich tracts occupy residues 27-63 and 157-180; these read NGED…DNDG and EDSD…EDKD. 5 WD repeats span residues 191-231, 294-334, 337-377, 383-423, and 446-482; these read NHNG…KALD, GHTE…PAIT, AHTA…DNSP, YHTG…DTEE, and QGQH…NSEE.

It localises to the nucleus. Its subcellular location is the nucleolus. The polypeptide is Glutamate-rich WD repeat-containing protein 1 (grwd1) (Dictyostelium discoideum (Social amoeba)).